The primary structure comprises 330 residues: Calponin-3 (330 aa).

N6-acetyllysine is present on lysine 23. One can recognise a Calponin-homology (CH) domain in the interval 26-130; the sequence is QQAEEDLRNW…TLVALAGLAK (105 aa). An N6-methyllysine modification is found at lysine 158. Calponin-like repeat units lie at residues 164–189, 204–229, and 243–268; these read IGLQ…RHLY, ISLQ…RDIY, and ISLQ…RQVY. Positions 279–330 are disordered; that stretch reads PVIHNGSQGTGTNGSEISDSDYQAEYPDEYHGEYPDEYPREYQYGDDQGIDY. A compositionally biased stretch (basic and acidic residues) spans 306-318; the sequence is DEYHGEYPDEYPR.

It belongs to the calponin family.

Thin filament-associated protein that is implicated in the regulation and modulation of smooth muscle contraction. It is capable of binding to actin, calmodulin and tropomyosin. The interaction of calponin with actin inhibits the actomyosin Mg-ATPase activity. The chain is Calponin-3 (Cnn3) from Rattus norvegicus (Rat).